The sequence spans 356 residues: Protein RecA (356 aa).

Residue 78-85 (GPESSGKT) participates in ATP binding.

It belongs to the RecA family.

Its subcellular location is the cytoplasm. Functionally, can catalyze the hydrolysis of ATP in the presence of single-stranded DNA, the ATP-dependent uptake of single-stranded DNA by duplex DNA, and the ATP-dependent hybridization of homologous single-stranded DNAs. It interacts with LexA causing its activation and leading to its autocatalytic cleavage. The chain is Protein RecA from Paracoccus denitrificans.